A 377-amino-acid polypeptide reads, in one-letter code: MSRGIIIIGSGFAARQLVKNIRKQDAHVPLTLIAADSMDEYNKPDLSHVISQSQRADDLTRQLAGEFAEQFNLRLFPHTWVTDIDADAHVVKSQDKQWQYDKLVLATGAAAFVPPIAGRELMLTLNNQQEYRACETPLRDAQRVLIVGGGLIGSELAMDFCRAGKTVTLMDNAASLLASLMPPEVSSRLQHHLTDMGVHLLLKSQLQKLEKIEAGIRATLASQRSIEVDAVIAATGLRPETALARRAGVVVNRGVCVDSYLQTSHPDIYAIGDCAEINGQVLPFLQPIQLSAMYLAKNLLGGNAPLKLPAMLVKVKTPELPLHLAGETQRRDLSWQITAESDGMIAKGMSGEGQLRAFVVSEDRMKEAFALLKTLSV.

The protein belongs to the FAD-dependent oxidoreductase family. The cofactor is FAD.

Its subcellular location is the cytoplasm. It carries out the reaction 2 reduced [nitric oxide reductase rubredoxin domain] + NAD(+) + H(+) = 2 oxidized [nitric oxide reductase rubredoxin domain] + NADH. It functions in the pathway nitrogen metabolism; nitric oxide reduction. Functionally, one of at least two accessory proteins for anaerobic nitric oxide (NO) reductase. Reduces the rubredoxin moiety of NO reductase. In Salmonella paratyphi A (strain AKU_12601), this protein is Nitric oxide reductase FlRd-NAD(+) reductase.